The following is a 444-amino-acid chain: Tubulin beta-2 chain (444 aa).

Gln11, Glu69, Ser138, Gly142, Thr143, Gly144, Asn204, and Asn226 together coordinate GTP. Residue Glu69 coordinates Mg(2+).

Belongs to the tubulin family. Dimer of alpha and beta chains. A typical microtubule is a hollow water-filled tube with an outer diameter of 25 nm and an inner diameter of 15 nM. Alpha-beta heterodimers associate head-to-tail to form protofilaments running lengthwise along the microtubule wall with the beta-tubulin subunit facing the microtubule plus end conferring a structural polarity. Microtubules usually have 13 protofilaments but different protofilament numbers can be found in some organisms and specialized cells. Mg(2+) is required as a cofactor.

The protein resides in the cytoplasm. It localises to the cytoskeleton. Its function is as follows. Tubulin is the major constituent of microtubules, a cylinder consisting of laterally associated linear protofilaments composed of alpha- and beta-tubulin heterodimers. Microtubules grow by the addition of GTP-tubulin dimers to the microtubule end, where a stabilizing cap forms. Below the cap, tubulin dimers are in GDP-bound state, owing to GTPase activity of alpha-tubulin. The polypeptide is Tubulin beta-2 chain (TUBB2) (Zea mays (Maize)).